The sequence spans 198 residues: Nuclear transcription factor Y subunit A-4 (198 aa).

The tract at residues 1-47 is disordered; it reads MTSSVHELSDNNESHAKKERPDSQTRPQVPSGRSSESIDTNSVYSEP. The span at 7 to 23 shows a compositional bias: basic and acidic residues; sequence ELSDNNESHAKKERPDS. Positions 24–44 are enriched in polar residues; that stretch reads QTRPQVPSGRSSESIDTNSVY. The Subunit association domain (SAD) signature appears at 101 to 124; the sequence is FVNAKQYHGILRRRQSRAKLEARN. The NFYA/HAP2-type DNA-binding region spans 131–156; the sequence is KPYMHESRHLHAIRRPRGCGGRFLNA. A disordered region spans residues 136–198; that stretch reads ESRHLHAIRR…MATSGPNGRS (63 aa). A compositionally biased stretch (basic and acidic residues) spans 156–166; the sequence is AKKENGDHKEE.

It belongs to the NFYA/HAP2 subunit family. In terms of assembly, heterotrimeric transcription factor composed of three components, NF-YA, NF-YB and NF-YC. NF-YB and NF-YC must interact and dimerize for NF-YA association and DNA binding. In terms of tissue distribution, expressed in stems, caulines, and senescent flowers.

The protein localises to the nucleus. Its function is as follows. Stimulates the transcription of various genes by recognizing and binding to a CCAAT motif in promoters. The sequence is that of Nuclear transcription factor Y subunit A-4 (NFYA4) from Arabidopsis thaliana (Mouse-ear cress).